The chain runs to 87 residues: HssA/B-like protein 57 (87 aa).

This sequence belongs to the hssA/B family.

This Dictyostelium discoideum (Social amoeba) protein is HssA/B-like protein 57 (hssl57).